Here is a 612-residue protein sequence, read N- to C-terminus: Alpha-glycerophosphate oxidase (612 aa).

21 to 49 (DLLIIGGGITGAGVALQAAASGLDTGLIE) is an FAD binding site. Residues 398-408 (VETSTSEKELD) are compositionally biased toward basic and acidic residues. The tract at residues 398-418 (VETSTSEKELDPSAVSRGSSF) is disordered.

It belongs to the FAD-dependent glycerol-3-phosphate dehydrogenase family. FAD serves as cofactor.

The protein resides in the cytoplasm. It catalyses the reaction sn-glycerol 3-phosphate + O2 = dihydroxyacetone phosphate + H2O2. This Streptococcus pyogenes serotype M3 (strain ATCC BAA-595 / MGAS315) protein is Alpha-glycerophosphate oxidase (glpO).